A 154-amino-acid polypeptide reads, in one-letter code: Fimbrial protein (154 aa).

Positions 1 to 6 are cleaved as a propeptide — leader sequence; that stretch reads MKAQKG. Residue F7 is modified to N-methylphenylalanine. A helical membrane pass occupies residues 7 to 27; the sequence is FTLIELMIVVAIIGILAAIAI. An intrachain disulfide couples C133 to C151. O-linked (FucNAc...) serine glycosylation occurs at S154.

This sequence belongs to the N-Me-Phe pilin family. As to quaternary structure, the pili are polar flexible filaments of about 5.4 nanometers diameter and 2.5 micrometers average length; they consist of only a single polypeptide chain arranged in a helical configuration of five subunits per turn in the assembled pilus. O-glycosylated; glycan consists of 5NbetaOHC47NFmPse(alpha2-4)Xyl(beta1-3)FucNAc in beta1-O linkage to Ser.

The protein resides in the fimbrium. Its subcellular location is the membrane. The protein is Fimbrial protein (pilA) of Pseudomonas aeruginosa.